Reading from the N-terminus, the 113-residue chain is Iron-sulfur cluster insertion protein ErpA (113 aa).

Iron-sulfur cluster-binding residues include Cys41, Cys105, and Cys107.

It belongs to the HesB/IscA family. As to quaternary structure, homodimer. Iron-sulfur cluster is required as a cofactor.

Required for insertion of 4Fe-4S clusters for at least IspG. This is Iron-sulfur cluster insertion protein ErpA from Mannheimia succiniciproducens (strain KCTC 0769BP / MBEL55E).